Reading from the N-terminus, the 492-residue chain is GMP reductase (492 aa).

NADP(+) is bound by residues 30–31 and Arg78; that span reads SR. CBS domains are found at residues 99–162 and 164–223; these read LIED…LVET and MTPV…LNAT. NADP(+) contacts are provided by residues 260–262 and 313–314; these read DIA and VG. Residues Gly314, Gly316, and Cys319 each contribute to the K(+) site. The Thioimidate intermediate role is filled by Cys319. Catalysis depends on Thr321, which acts as the Proton donor/acceptor. Residue Arg322 coordinates K(+). GMP is bound by residues 352–354, 375–376, and 401–403; these read DGG, GN, and GMA. NADP(+)-binding positions include Met402 and 454-457; that span reads SGIS. Positions 490–492 match the Microbody targeting signal motif; it reads SKL.

This sequence belongs to the IMPDH/GMPR family. GuaC type 1 subfamily. In terms of assembly, homotetramer.

The protein localises to the glycosome. It carries out the reaction IMP + NH4(+) + NADP(+) = GMP + NADPH + 2 H(+). Its activity is regulated as follows. Activated by GTP and inhibited by ATP and IMP. Mycophenolic acid (MPA) is a competitive inhibitor of the enzyme with respect to NADPH. In terms of biological role, catalyzes the irreversible NADPH-dependent deamination of GMP to IMP. It functions in the conversion of nucleobase, nucleoside and nucleotide derivatives of G to A nucleotides, and in maintaining the intracellular balance of A and G nucleotides. In Leishmania major, this protein is GMP reductase.